The primary structure comprises 82 residues: ATP synthase subunit c (82 aa).

2 helical membrane-spanning segments follow: residues 3 to 23 (PLVA…ASLG) and 57 to 77 (LAFM…LLFA).

This sequence belongs to the ATPase C chain family. In terms of assembly, F-type ATPases have 2 components, F(1) - the catalytic core - and F(0) - the membrane proton channel. F(1) has five subunits: alpha(3), beta(3), gamma(1), delta(1), epsilon(1). F(0) has four main subunits: a(1), b(1), b'(1) and c(10-14). The alpha and beta chains form an alternating ring which encloses part of the gamma chain. F(1) is attached to F(0) by a central stalk formed by the gamma and epsilon chains, while a peripheral stalk is formed by the delta, b and b' chains.

The protein resides in the cellular thylakoid membrane. Its function is as follows. F(1)F(0) ATP synthase produces ATP from ADP in the presence of a proton or sodium gradient. F-type ATPases consist of two structural domains, F(1) containing the extramembraneous catalytic core and F(0) containing the membrane proton channel, linked together by a central stalk and a peripheral stalk. During catalysis, ATP synthesis in the catalytic domain of F(1) is coupled via a rotary mechanism of the central stalk subunits to proton translocation. In terms of biological role, key component of the F(0) channel; it plays a direct role in translocation across the membrane. A homomeric c-ring of between 10-14 subunits forms the central stalk rotor element with the F(1) delta and epsilon subunits. In Synechococcus sp. (strain PCC 6716), this protein is ATP synthase subunit c.